Reading from the N-terminus, the 208-residue chain is Calaxin (208 aa).

EF-hand domains lie at 64–99 (TDDM…FLHG), 100–135 (TLEE…SLLK), and 145–180 (GVKD…ENLL). 13 residues coordinate Ca(2+): Asp77, Asp79, Asp81, Asp113, Asn115, Asp117, Tyr119, Glu124, Asp158, Asp160, Asp162, Lys164, and Asp169.

As to quaternary structure, component of the outer dynein arm-docking complex along with ODAD1, ODAD2, ODAD3 and ODAD4.

It is found in the cytoplasm. Its subcellular location is the cytoskeleton. It localises to the cilium axoneme. The protein localises to the cell projection. The protein resides in the cilium. It is found in the flagellum. Functionally, component of the outer dynein arm-docking complex (ODA-DC) that mediates outer dynein arms (ODA) binding onto the doublet microtubule. Seems to regulate the assembly of both ODAs and their axonemal docking complex onto ciliary microtubules. Regulates ciliary and flagellar motility and is required for cilia-driven determination of body laterality. This is Calaxin (clxn) from Xenopus laevis (African clawed frog).